A 470-amino-acid polypeptide reads, in one-letter code: Uronate isomerase (470 aa).

The protein belongs to the metallo-dependent hydrolases superfamily. Uronate isomerase family.

It carries out the reaction D-glucuronate = D-fructuronate. The enzyme catalyses aldehydo-D-galacturonate = keto-D-tagaturonate. The protein operates within carbohydrate metabolism; pentose and glucuronate interconversion. The protein is Uronate isomerase of Salmonella heidelberg (strain SL476).